A 455-amino-acid chain; its full sequence is tRNA modification GTPase MnmE (455 aa).

(6S)-5-formyl-5,6,7,8-tetrahydrofolate is bound by residues Arg-26, Glu-86, and Arg-125. Positions 222-376 (GLKTAIIGRP…VEEKINQIFF (155 aa)) constitute a TrmE-type G domain. Asn-232 contacts K(+). GTP contacts are provided by residues 232-237 (NVGKSS), 251-257 (TDIAGTT), and 276-279 (DTAG). Ser-236 is a binding site for Mg(2+). K(+) contacts are provided by Thr-251, Ile-253, and Thr-256. Thr-257 contributes to the Mg(2+) binding site. Position 455 (Lys-455) interacts with (6S)-5-formyl-5,6,7,8-tetrahydrofolate.

Belongs to the TRAFAC class TrmE-Era-EngA-EngB-Septin-like GTPase superfamily. TrmE GTPase family. Homodimer. Heterotetramer of two MnmE and two MnmG subunits. It depends on K(+) as a cofactor.

It is found in the cytoplasm. Its function is as follows. Exhibits a very high intrinsic GTPase hydrolysis rate. Involved in the addition of a carboxymethylaminomethyl (cmnm) group at the wobble position (U34) of certain tRNAs, forming tRNA-cmnm(5)s(2)U34. The polypeptide is tRNA modification GTPase MnmE (Lactococcus lactis subsp. lactis (strain IL1403) (Streptococcus lactis)).